The sequence spans 293 residues: Phosphate-binding protein PstS 2 (293 aa).

The first 23 residues, 1 to 23, serve as a signal peptide directing secretion; sequence MKKHKMLSLLAVSGLMGIGILAG. A lipid anchor (N-palmitoyl cysteine) is attached at Cys24. Cys24 is lipidated: S-diacylglycerol cysteine.

It belongs to the PstS family. As to quaternary structure, the complex is composed of two ATP-binding proteins (PstB), two transmembrane proteins (PstC and PstA) and a solute-binding protein (PstS).

The protein resides in the cell membrane. Functionally, part of the ABC transporter complex PstSACB involved in phosphate import. The polypeptide is Phosphate-binding protein PstS 2 (pstS2) (Streptococcus agalactiae serotype III (strain NEM316)).